A 402-amino-acid polypeptide reads, in one-letter code: uncharacterized protein (402 aa).

Helical transmembrane passes span 26 to 46 (IFMS…AIAY), 67 to 87 (VALA…YVGF), 96 to 116 (FAAF…LTII), 126 to 146 (TVSI…NGTL), 168 to 188 (LFIL…IGFL), 213 to 233 (YVAY…MIDS), 235 to 255 (LFLL…GGYG), 289 to 309 (PIVI…GSII), 312 to 332 (ISVF…FDSL), 338 to 358 (FKNI…AVTI), 360 to 380 (FALL…SFLL), and 381 to 401 (LYKK…GYLI).

It belongs to the chromate ion transporter (CHR) (TC 2.A.51) family.

It is found in the cell membrane. This is an uncharacterized protein from Methanocaldococcus jannaschii (strain ATCC 43067 / DSM 2661 / JAL-1 / JCM 10045 / NBRC 100440) (Methanococcus jannaschii).